Consider the following 325-residue polypeptide: Phenylalanine--tRNA ligase alpha subunit (325 aa).

Residue Glu-251 participates in Mg(2+) binding.

This sequence belongs to the class-II aminoacyl-tRNA synthetase family. Phe-tRNA synthetase alpha subunit type 1 subfamily. In terms of assembly, tetramer of two alpha and two beta subunits. Requires Mg(2+) as cofactor.

It is found in the cytoplasm. It carries out the reaction tRNA(Phe) + L-phenylalanine + ATP = L-phenylalanyl-tRNA(Phe) + AMP + diphosphate + H(+). This chain is Phenylalanine--tRNA ligase alpha subunit (pheS), found in Thermotoga maritima (strain ATCC 43589 / DSM 3109 / JCM 10099 / NBRC 100826 / MSB8).